A 274-amino-acid chain; its full sequence is Large ribosomal subunit protein uL2 (274 aa).

Disordered stretches follow at residues 34–53 (IAPI…TMRY) and 216–274 (RRPR…RRKK).

The protein belongs to the universal ribosomal protein uL2 family. In terms of assembly, part of the 50S ribosomal subunit. Forms a bridge to the 30S subunit in the 70S ribosome.

Its function is as follows. One of the primary rRNA binding proteins. Required for association of the 30S and 50S subunits to form the 70S ribosome, for tRNA binding and peptide bond formation. It has been suggested to have peptidyltransferase activity; this is somewhat controversial. Makes several contacts with the 16S rRNA in the 70S ribosome. This is Large ribosomal subunit protein uL2 from Flavobacterium psychrophilum (strain ATCC 49511 / DSM 21280 / CIP 103535 / JIP02/86).